We begin with the raw amino-acid sequence, 429 residues long: C4-dicarboxylate transport protein (429 aa).

8 consecutive transmembrane segments (helical) span residues valine 9 to proline 29, leucine 45 to methionine 65, leucine 79 to isoleucine 99, glycine 149 to glycine 169, valine 185 to methionine 205, leucine 223 to alanine 243, isoleucine 308 to methionine 328, and alanine 356 to isoleucine 376.

This sequence belongs to the dicarboxylate/amino acid:cation symporter (DAACS) (TC 2.A.23) family.

It is found in the cell inner membrane. In terms of biological role, responsible for the transport of dicarboxylates such as succinate, fumarate, and malate from the periplasm across the membrane. This chain is C4-dicarboxylate transport protein, found in Burkholderia ambifaria (strain MC40-6).